The sequence spans 397 residues: MTLLNPYFGKFGGMYVPQILMPALLELEKNFVEAQKDINFHKTFFNLLKNYAGRPTPLTLCNNLTKGTKTRIYLKREDLLHGGAHKTNQVLGQAILAIRMKKNEIIAETGAGQHGVATAIACALLNLKCRIYMGIKDIKRQHPNVFRMKLMGAEVIPVKNGSGTLKDACNEALRDWSNSYKNSHYMIGTAAGPHPYPTIVREFQKIIGEETKQQILEQETKLPNAIIACVGGGSNAIGIFSNFINDKEVSLIGVEPGGKGIKTGQHGAPLKHGRTGIFFGMKSHLMQDQEGQIQESWSISAGLDFPSVGPEHAWLNSINRAQYVSITDQEALDTFQLLCKKEGIIPALESSHALAYALKLMNLSPKKEQIFVVNLSGRGDKDIFTVHDILKKTGKRI.

An N6-(pyridoxal phosphate)lysine modification is found at Lys86.

This sequence belongs to the TrpB family. In terms of assembly, tetramer of two alpha and two beta chains. Requires pyridoxal 5'-phosphate as cofactor.

The enzyme catalyses (1S,2R)-1-C-(indol-3-yl)glycerol 3-phosphate + L-serine = D-glyceraldehyde 3-phosphate + L-tryptophan + H2O. The protein operates within amino-acid biosynthesis; L-tryptophan biosynthesis; L-tryptophan from chorismate: step 5/5. Its function is as follows. The beta subunit is responsible for the synthesis of L-tryptophan from indole and L-serine. This is Tryptophan synthase beta chain (trpB) from Buchnera aphidicola subsp. Diuraphis noxia.